The sequence spans 787 residues: Endonuclease MutS2 (787 aa).

336–343 (GPNTGGKT) contacts ATP. In terms of domain architecture, Smr spans 712 to 787 (LDLRGVRYED…GNGATEVQFK (76 aa)).

This sequence belongs to the DNA mismatch repair MutS family. MutS2 subfamily. As to quaternary structure, homodimer. Binds to stalled ribosomes, contacting rRNA.

Functionally, endonuclease that is involved in the suppression of homologous recombination and thus may have a key role in the control of bacterial genetic diversity. In terms of biological role, acts as a ribosome collision sensor, splitting the ribosome into its 2 subunits. Detects stalled/collided 70S ribosomes which it binds and splits by an ATP-hydrolysis driven conformational change. Acts upstream of the ribosome quality control system (RQC), a ribosome-associated complex that mediates the extraction of incompletely synthesized nascent chains from stalled ribosomes and their subsequent degradation. Probably generates substrates for RQC. This Lactiplantibacillus plantarum (strain ATCC BAA-793 / NCIMB 8826 / WCFS1) (Lactobacillus plantarum) protein is Endonuclease MutS2.